A 352-amino-acid polypeptide reads, in one-letter code: Lipoyl synthase (352 aa).

The segment at 1-21 is disordered; the sequence is MTSVDTPTPHGGTPAPAPATA. The [4Fe-4S] cluster site is built by cysteine 71, cysteine 76, cysteine 82, cysteine 97, cysteine 101, cysteine 104, and serine 308. The Radical SAM core domain occupies 83-297; that stretch reads WEDREATFLI…SRVAEEIGFA (215 aa).

This sequence belongs to the radical SAM superfamily. Lipoyl synthase family. The cofactor is [4Fe-4S] cluster.

It is found in the cytoplasm. The catalysed reaction is [[Fe-S] cluster scaffold protein carrying a second [4Fe-4S](2+) cluster] + N(6)-octanoyl-L-lysyl-[protein] + 2 oxidized [2Fe-2S]-[ferredoxin] + 2 S-adenosyl-L-methionine + 4 H(+) = [[Fe-S] cluster scaffold protein] + N(6)-[(R)-dihydrolipoyl]-L-lysyl-[protein] + 4 Fe(3+) + 2 hydrogen sulfide + 2 5'-deoxyadenosine + 2 L-methionine + 2 reduced [2Fe-2S]-[ferredoxin]. Its pathway is protein modification; protein lipoylation via endogenous pathway; protein N(6)-(lipoyl)lysine from octanoyl-[acyl-carrier-protein]: step 2/2. Functionally, catalyzes the radical-mediated insertion of two sulfur atoms into the C-6 and C-8 positions of the octanoyl moiety bound to the lipoyl domains of lipoate-dependent enzymes, thereby converting the octanoylated domains into lipoylated derivatives. The sequence is that of Lipoyl synthase from Nocardia farcinica (strain IFM 10152).